A 92-amino-acid chain; its full sequence is Small ribosomal subunit protein bS6 (92 aa).

Belongs to the bacterial ribosomal protein bS6 family.

Its function is as follows. Binds together with bS18 to 16S ribosomal RNA. In Clostridioides difficile (strain 630) (Peptoclostridium difficile), this protein is Small ribosomal subunit protein bS6.